A 332-amino-acid chain; its full sequence is Galactinol synthase 7 (332 aa).

The active site involves lysine 101. Residues aspartate 117, aspartate 119, and histidine 255 each contribute to the Mn(2+) site.

Belongs to the glycosyltransferase 8 family. Galactosyltransferase subfamily. It depends on a divalent metal cation as a cofactor.

It localises to the cytoplasm. It catalyses the reaction myo-inositol + UDP-alpha-D-galactose = alpha-D-galactosyl-(1-&gt;3)-1D-myo-inositol + UDP + H(+). Functionally, galactinol synthase involved in the biosynthesis of raffinose family oligosaccharides (RFOs) that function as osmoprotectants. May promote plant stress tolerance. The polypeptide is Galactinol synthase 7 (GOLS7) (Arabidopsis thaliana (Mouse-ear cress)).